Reading from the N-terminus, the 263-residue chain is MNYLNKIRIENPLTICYTNDVVKNFTANGLLSIGASPAMSEAPEEAEEFYKVAQALLINIGTLTAQNEQDIIAIAQTANEAGLPIVFDPVAVGASTYRKQFCKLLLKSAKVSVIKGNASEILALIDDTATMKGTDSDAYLDAVAIAKKAYAIYKTAIVITGKEDVIVQGDKAIVLANGSPLLARVTGAGCLLGGIIAGFLFRETEPDIEALIEAVSVFNIAAEVAAENENCGGPGTFSPLLLDTLYHLNETTYQQRICIQEVE.

Residue Met39 coordinates substrate. 2 residues coordinate ATP: Lys115 and Thr160. A substrate-binding site is contributed by Gly187.

This sequence belongs to the Thz kinase family. Requires Mg(2+) as cofactor.

It catalyses the reaction 5-(2-hydroxyethyl)-4-methylthiazole + ATP = 4-methyl-5-(2-phosphooxyethyl)-thiazole + ADP + H(+). It functions in the pathway cofactor biosynthesis; thiamine diphosphate biosynthesis; 4-methyl-5-(2-phosphoethyl)-thiazole from 5-(2-hydroxyethyl)-4-methylthiazole: step 1/1. Its function is as follows. Catalyzes the phosphorylation of the hydroxyl group of 4-methyl-5-beta-hydroxyethylthiazole (THZ). The sequence is that of Hydroxyethylthiazole kinase from Staphylococcus aureus (strain bovine RF122 / ET3-1).